A 598-amino-acid chain; its full sequence is Pentatricopeptide repeat-containing protein At5g14820, mitochondrial (598 aa).

The N-terminal 98 residues, Met-1–Val-98, are a transit peptide targeting the mitochondrion. 10 PPR repeats span residues Asp-193 to Thr-227, Glu-229 to Ile-261, Gly-262 to Arg-292, Asn-296 to Pro-330, Asp-331 to Pro-365, Asn-366 to Pro-400, Asp-401 to Pro-435, Asp-436 to Pro-470, Ser-471 to Pro-505, and Asp-506 to Thr-540.

It belongs to the PPR family. P subfamily.

The protein localises to the mitochondrion. This is Pentatricopeptide repeat-containing protein At5g14820, mitochondrial from Arabidopsis thaliana (Mouse-ear cress).